Here is a 434-residue protein sequence, read N- to C-terminus: GTPase Obg (434 aa).

One can recognise an Obg domain in the interval 1 to 159 (MQFIDRCQIK…KTVRLELKYL (159 aa)). The OBG-type G domain maps to 160–329 (ANVGIVGYPN…LVDRVFDLYQ (170 aa)). Residues 166-173 (GYPNAGKS), 191-195 (FTTLV), 212-215 (DIPG), 282-285 (NKMD), and 310-312 (ISA) contribute to the GTP site. Mg(2+)-binding residues include Ser173 and Thr193. The OCT domain occupies 356 to 434 (EKTIDDDPLD…ICDYEYLIDE (79 aa)).

It belongs to the TRAFAC class OBG-HflX-like GTPase superfamily. OBG GTPase family. Monomer. The cofactor is Mg(2+).

It is found in the cytoplasm. Functionally, an essential GTPase which binds GTP, GDP and possibly (p)ppGpp with moderate affinity, with high nucleotide exchange rates and a fairly low GTP hydrolysis rate. Plays a role in control of the cell cycle, stress response, ribosome biogenesis and in those bacteria that undergo differentiation, in morphogenesis control. The chain is GTPase Obg from Mycoplasmoides gallisepticum (strain R(low / passage 15 / clone 2)) (Mycoplasma gallisepticum).